The primary structure comprises 759 residues: MSKTIILLAFFLSIVLNVQISFVVAESKVYVVYLGEKEHDNPESVTESHHQMLWSLLGSKEAVLDSIVYSYRHGFSGFAAKLTESQAQQISELPEVVQVIPNTLYEMTTTRTWDYLGVSPGNSDSLLQKANMGYNVIVGVIDTGVWPESEMFNDKGYGPIPSRWKGGCESGELFNGSIHCNRKLIGAKYFIDANNAQFGVLNKTENPDYLSPRDFNGHGTHVASTIGGSFLPNVSYLGLGRGTARGGAPGVHIAVYKACWVQRGCSGADVLKAMDEAIHDGVDILSLSLQTSVPLFPETDARELTSVGAFHAVAKGIPVVAAASNAGPTAQTLSNVAPWVLTVAATTQDRSFPTAITLGNNITILGQAIFGGSELGFVGLTYPESPLSGDCEKLSANPKSAMEGKVVLCFAASTPSNAAITAVINAGGLGLIMARNPTHLLRPLRNFPYVSVDFELGTDILFYIRSTRSPIVNIQASRTLFGQSVSTKVATFSSRGPNSVSPAILKPDIAAPGVNILAAISPNSINDGGFAMMSGTSMATPVVSGVVVLLKSLHPDWSPSAIKSAIVTTAWRTDPSGEPIFADGSSRKLADPFDYGGGLINPEKAVKPGLIYDMTTDDYVMYMCSVDYSDISISRVLGKITVCPNPKPSVLDLNLPSITIPNLRGEVTLTRTVTNVGPVNSVYKVVIDPPTGVNVAVTPTELVFDSTTTKRSFTVRVSTTHKVNTGYYFGSLTWTDTLHNVAIPVSVRTQILQRYYDEN.

A signal peptide spans M1–A25. A propeptide spans E26 to T108 (activation peptide). One can recognise an Inhibitor I9 domain in the interval V29–E106. The Peptidase S8 domain occupies T112–V606. Residue D142 is the Charge relay system of the active site. 2 N-linked (GlcNAc...) asparagine glycosylation sites follow: N175 and N202. H218 acts as the Charge relay system in catalysis. N-linked (GlcNAc...) asparagine glycosylation is found at N233 and N361. The 75-residue stretch at D390–I464 folds into the PA domain. The active-site Charge relay system is the S537.

It belongs to the peptidase S8 family.

The protein localises to the secreted. The sequence is that of Subtilisin-like protease SBT3.10 from Arabidopsis thaliana (Mouse-ear cress).